Reading from the N-terminus, the 137-residue chain is Transcription antitermination protein NusB (137 aa).

It belongs to the NusB family.

Involved in transcription antitermination. Required for transcription of ribosomal RNA (rRNA) genes. Binds specifically to the boxA antiterminator sequence of the ribosomal RNA (rrn) operons. The sequence is that of Transcription antitermination protein NusB from Clavibacter sepedonicus (Clavibacter michiganensis subsp. sepedonicus).